Reading from the N-terminus, the 492-residue chain is Catalase isozyme C (492 aa).

R62 contacts heme. Residue H65 is part of the active site. R102 contributes to the heme binding site. N138 is a catalytic residue. A heme-binding site is contributed by F151. Residue Y210 is modified to Phosphotyrosine; by STRK1. Positions 325–348 form a cross-link, 3-(S-cysteinyl)-tyrosine (Cys-Tyr); that stretch reads CPGIIVPGIYYSDDKLLQTRIFSY. The heme site is built by R344, Y348, and R355. The Peroxisome targeting signal motif lies at 484–492; sequence SRLSAKPSM.

Belongs to the catalase family. As to quaternary structure, homotetramer. Interacts with GLO1 and GLO4; these interactions are disturbed by alpha-hydroxy-2-pyridinemethanesulfonic acid (HPMS) and salicylic acid (SA). Interacts with STRK1 at the plasma membrane. The cofactor is heme. In terms of processing, activated by STRK1-mediated phosphorylation at Tyr-210 upon salt and oxidative stress. In terms of tissue distribution, highly expressed in mature leaves. Mainly expressed in leaf blades, stems, panicles, leaf sheaths, and culms, but barely in roots.

It is found in the peroxisome. Its subcellular location is the glyoxysome. It localises to the cell membrane. The enzyme catalyses 2 H2O2 = O2 + 2 H2O. Its activity is regulated as follows. Strongly inhibited by beta-mercaptoethanol, sodium azide and potassium cyanide. Slightly repressed by 3-amino-1,2,4-triazole (3-AT). Activity is repressed proportionally to increased concentration of NaCl, KCl, LiCl and MgCl(2). Functionally, occurs in almost all aerobically respiring organisms and serves to protect cells from the toxic effects of hydrogen peroxide. Responsible for the redox homeostasis in leaves. Prevents nitric oxide (NO) accumulation and subsequent NO-mediated leaf cell death as well as the S-nitrosylation of specific proteins (e.g. glyceraldehyde 3-phosphate dehydrogenase and thioredoxin) by degrading H(2)O(2). Involved in photorespiration. Promotes drought stress tolerance and recovery. Involved in NO-mediated enhanced tolerance to zinc oxide nanoparticles (ZnO NPs)-induced phytotoxicity. Participates in melatonin-mediated detoxification. The chain is Catalase isozyme C from Oryza sativa subsp. japonica (Rice).